The following is a 365-amino-acid chain: Heat-inducible transcription repressor HrcA (365 aa).

The protein belongs to the HrcA family.

Functionally, negative regulator of class I heat shock genes (grpE-dnaK-dnaJ and groELS operons). Prevents heat-shock induction of these operons. This chain is Heat-inducible transcription repressor HrcA, found in Nodularia spumigena.